Reading from the N-terminus, the 576-residue chain is Alpha-bisabolol synthase (576 aa).

5 residues coordinate (2E,6E)-farnesyl diphosphate: Arg286, Asp323, Asp327, Arg466, and Asn469. Residues Asp323 and Asp327 each coordinate Mg(2+). Residues 323–327 carry the DDXXD motif motif; sequence DDVYD. Mg(2+) is bound by residues Asn469, Thr473, and Glu477.

This sequence belongs to the terpene synthase family. Tpsb subfamily. Mg(2+) serves as cofactor. Mn(2+) is required as a cofactor.

In terms of biological role, produces a mixture of beta-bisabolene and alpha-bisabolol, along with traces of alpha-bisabolene and farnesene isomers from (2E,6E)-farnesyl diphosphate in fragrance biosynthesis. This Santalum spicatum (Australian sandalwood) protein is Alpha-bisabolol synthase.